A 471-amino-acid chain; its full sequence is Sulfate adenylyltransferase subunit 1 (471 aa).

The tr-type G domain maps to 22–237 (KELLRFLTCG…LESVQITGAK (216 aa)). Residues 31–38 (GSVDDGKS) form a G1 region. 31–38 (GSVDDGKS) contacts GTP. A G2 region spans residues 89–93 (GITID). The segment at 110 to 113 (DTPG) is G3. Residues 110-114 (DTPGH) and 165-168 (NKMD) contribute to the GTP site. Residues 165-168 (NKMD) are G4. The segment at 202-204 (SAL) is G5.

It belongs to the TRAFAC class translation factor GTPase superfamily. Classic translation factor GTPase family. CysN/NodQ subfamily. In terms of assembly, heterodimer composed of CysD, the smaller subunit, and CysN.

It carries out the reaction sulfate + ATP + H(+) = adenosine 5'-phosphosulfate + diphosphate. Its pathway is sulfur metabolism; hydrogen sulfide biosynthesis; sulfite from sulfate: step 1/3. Its function is as follows. With CysD forms the ATP sulfurylase (ATPS) that catalyzes the adenylation of sulfate producing adenosine 5'-phosphosulfate (APS) and diphosphate, the first enzymatic step in sulfur assimilation pathway. APS synthesis involves the formation of a high-energy phosphoric-sulfuric acid anhydride bond driven by GTP hydrolysis by CysN coupled to ATP hydrolysis by CysD. This is Sulfate adenylyltransferase subunit 1 from Saccharophagus degradans (strain 2-40 / ATCC 43961 / DSM 17024).